We begin with the raw amino-acid sequence, 426 residues long: MILIRNVRLVDAMGERGPLDVLIGEGRILSLEGGEAKQVVDGTGCFLAPGFLDLHAHLREPGEEVKEDLFSGLLAAVRGGYTDLVSMPNTNPPVDTPEAVRALKEKAKALGLARLHPAAALTEKQEGKTLTPAGLLQEAGAVLLTDDGRTNEDAGVLAAGLLMAAPLGLPVAVHAEDAGLRRNGVMNDGPLADLLGLPGNPPEAEAARIARDLEVLRYALRRSPATPRLHVQHLSTKRGLELVREAKRAGLPVTAEATPHHLTLTEEALRTFDPLFKVAPPLRGEEDREALLEGLLDGTLDAIATDHAPHTQAEKEMDLLRAPFGIPSLEVAFPLLYTELHLKRGFPLRRLVELFTDGPRRVLGLPPLHLEEGTEASLVLLDPKERPVDPQGFASKARFSPWTGWRLGGWPVLTLVEGRIVHEALE.

Zn(2+) is bound by residues histidine 55 and histidine 57. Residues 57-59 and asparagine 89 each bind substrate; that span reads HLR. Residues aspartate 147, histidine 174, histidine 233, and aspartate 306 each coordinate Zn(2+). Aspartate 306 is an active-site residue. Residues histidine 310 and 324–325 each bind substrate; that span reads FG.

This sequence belongs to the metallo-dependent hydrolases superfamily. DHOase family. Class I DHOase subfamily. The cofactor is Zn(2+).

The catalysed reaction is (S)-dihydroorotate + H2O = N-carbamoyl-L-aspartate + H(+). It functions in the pathway pyrimidine metabolism; UMP biosynthesis via de novo pathway; (S)-dihydroorotate from bicarbonate: step 3/3. Catalyzes the reversible cyclization of carbamoyl aspartate to dihydroorotate. The sequence is that of Dihydroorotase from Thermus aquaticus.